The following is a 423-amino-acid chain: Osteomodulin (423 aa).

Positions 1–20 (MGCLRPIYVLFFCFVVRVYG) are cleaved as a signal peptide. 6 positions are modified to sulfotyrosine: Tyr22, Tyr25, Tyr31, Tyr39, Tyr51, and Tyr77. Residues 53-91 (APFYQNILGCAKECFCPTNFPTSMYCDNRKLKTIPDIPM) enclose the LRRNT domain. LRR repeat units follow at residues 92–113 (HIQQLNLQFNDIEAVTADSFIN), 116–129 (HLKEINLSHNKIKS), 142–164 (NLQQLHLDHNNLEEFPFPLPKSL), 165–184 (ERLLLGYNEISTLPTHAMDG), 187–207 (NVTMLDLCYNHLSDSTLKGKI), 213–233 (KLMQLNLCNNRLESMPPGLPL), 234–255 (SLMYLSLENNSISSIPEDYFQK), 258–279 (KLHALRISHNKLEDIPYDIFNL), 281–294 (NLIELNVGHNKLKQ), 301–322 (NLEHLYLQNNEIQSINVTMMCP), and 331–353 (HLTYLRVDQNKLKEPISSYIFFC). N-linked (GlcNAc...) asparagine glycosylation is found at Asn113 and Asn121. The N-linked (GlcNAc...) asparagine glycan is linked to Asn187. Residues Asn242 and Asn278 are each glycosylated (N-linked (GlcNAc...) asparagine). A glycan (N-linked (GlcNAc...) asparagine) is linked at Asn316. Cys321 and Cys353 form a disulfide bridge. Residues 383 to 408 (YQDEEEEEEDDSQDHTLEGQEETEEH) form a disordered region. Over residues 385–394 (DEEEEEEDDS) the composition is skewed to acidic residues. A sulfotyrosine mark is found at Tyr413 and Tyr414.

It belongs to the small leucine-rich proteoglycan (SLRP) family. SLRP class II subfamily. As to quaternary structure, binds the alpha(V)beta(3)-integrin. In terms of processing, glycosylated; contains keratan sulfate. As to expression, osteoblast and odontoblast. Expressed in femoral bone and calvaria tissues. Detected in femoral head, rib, tendon and bone marrow.

It is found in the secreted. It localises to the extracellular space. The protein resides in the extracellular matrix. May be implicated in biomineralization processes. Has a function in binding of osteoblasts via the alpha(V)beta(3)-integrin. In Rattus norvegicus (Rat), this protein is Osteomodulin (Omd).